Consider the following 386-residue polypeptide: MAIASCFFCVPTPNTAISESNLTWPHIASFPRLSSSSSFNGVISAKSISFNRRVPITPVLSASSGNGGSDNNGGGLSGGGGGGDGGKNDGDGHGDEDRDRNRNEAMLLLKESGIELESLPKDLAAAIEAGRIPGSVITRFLELQKSAVMRWLMQFGGFRERLLADDLFMAKLAMECGVGIFTKTAAEYERRRENFFNELEVVFADVAMAIIADFMLVYLPAPTVSLRPPLALTAGGISKFFHNCPDNAFQVALSGTSYTLLQRLGAITRNGAKLFAVGTTSSLVGTAITNAFIKARKAVDQNSEGEVETVPIVSTSVAYGVYMAVSSNLRYQIVAGVIEQRLLEPMLHQHKLALSALCFAVRTGNTFLGSLLWVDYARLIGIQKSH.

A chloroplast-targeting transit peptide spans 1–61 (MAIASCFFCV…RRVPITPVLS (61 aa)). The segment at 61–99 (SASSGNGGSDNNGGGLSGGGGGGDGGKNDGDGHGDEDRD) is disordered. The span at 65 to 85 (GNGGSDNNGGGLSGGGGGGDG) shows a compositional bias: gly residues. Basic and acidic residues predominate over residues 86 to 99 (GKNDGDGHGDEDRD). 2 helical membrane passes run 201 to 221 (VVFA…YLPA) and 273 to 293 (KLFA…NAFI).

This sequence belongs to the RETICULATA family.

Its subcellular location is the plastid. It localises to the chloroplast membrane. Its function is as follows. May play a role in leaf development. The chain is Protein RETICULATA-RELATED 4, chloroplastic from Arabidopsis thaliana (Mouse-ear cress).